Consider the following 130-residue polypeptide: Sirohydrochlorin cobaltochelatase (130 aa).

His-12 (proton acceptor) is an active-site residue. Residue His-12 participates in Co(2+) binding. His-12 lines the Ni(2+) pocket. Residues Glu-48 and 73-78 (LASGVH) contribute to the substrate site. His-78 provides a ligand contact to Co(2+). A Ni(2+)-binding site is contributed by His-78.

This sequence belongs to the CbiX family. CbiXS subfamily. In terms of assembly, homotetramer; dimer of dimers.

The enzyme catalyses Co-sirohydrochlorin + 2 H(+) = sirohydrochlorin + Co(2+). The catalysed reaction is Ni-sirohydrochlorin + 2 H(+) = sirohydrochlorin + Ni(2+). Its pathway is cofactor biosynthesis; adenosylcobalamin biosynthesis; cob(II)yrinate a,c-diamide from sirohydrochlorin (anaerobic route): step 1/10. Catalyzes the insertion of Co(2+) into sirohydrochlorin as part of the anaerobic pathway to cobalamin biosynthesis (Potential). Involved in the biosynthesis of the unique nickel-containing tetrapyrrole coenzyme F430, the prosthetic group of methyl-coenzyme M reductase (MCR), which plays a key role in methanogenesis and anaerobic methane oxidation. Catalyzes the insertion of Ni(2+) into sirohydrochlorin to yield Ni-sirohydrochlorin. The protein is Sirohydrochlorin cobaltochelatase of Methanosarcina acetivorans (strain ATCC 35395 / DSM 2834 / JCM 12185 / C2A).